The primary structure comprises 156 residues: Small ribosomal subunit protein uS7 (156 aa).

It belongs to the universal ribosomal protein uS7 family. As to quaternary structure, part of the 30S ribosomal subunit. Contacts proteins S9 and S11.

In terms of biological role, one of the primary rRNA binding proteins, it binds directly to 16S rRNA where it nucleates assembly of the head domain of the 30S subunit. Is located at the subunit interface close to the decoding center, probably blocks exit of the E-site tRNA. This is Small ribosomal subunit protein uS7 from Desulfitobacterium hafniense (strain DSM 10664 / DCB-2).